We begin with the raw amino-acid sequence, 183 residues long: Probable RNA 2'-phosphotransferase (183 aa).

This sequence belongs to the KptA/TPT1 family.

In terms of biological role, removes the 2'-phosphate from RNA via an intermediate in which the phosphate is ADP-ribosylated by NAD followed by a presumed transesterification to release the RNA and generate ADP-ribose 1''-2''-cyclic phosphate (APPR&gt;P). May function as an ADP-ribosylase. The chain is Probable RNA 2'-phosphotransferase from Clostridium perfringens (strain 13 / Type A).